The primary structure comprises 247 residues: 5'-nucleotidase SurE (247 aa).

Residues D8, D9, S39, and N91 each contribute to the a divalent metal cation site.

It belongs to the SurE nucleotidase family. The cofactor is a divalent metal cation.

Its subcellular location is the cytoplasm. It catalyses the reaction a ribonucleoside 5'-phosphate + H2O = a ribonucleoside + phosphate. Functionally, nucleotidase that shows phosphatase activity on nucleoside 5'-monophosphates. The sequence is that of 5'-nucleotidase SurE from Methylobacillus flagellatus (strain ATCC 51484 / DSM 6875 / VKM B-1610 / KT).